A 210-amino-acid polypeptide reads, in one-letter code: Thymidylate kinase (210 aa).

ATP is bound at residue 11-18; sequence GLEGAGKS.

Belongs to the thymidylate kinase family.

It catalyses the reaction dTMP + ATP = dTDP + ADP. Phosphorylation of dTMP to form dTDP in both de novo and salvage pathways of dTTP synthesis. In Histophilus somni (strain 2336) (Haemophilus somnus), this protein is Thymidylate kinase.